Consider the following 183-residue polypeptide: ATP-dependent protease subunit HslV (183 aa).

Threonine 13 is an active-site residue. Na(+) is bound by residues glycine 168, cysteine 171, and threonine 174.

It belongs to the peptidase T1B family. HslV subfamily. In terms of assembly, a double ring-shaped homohexamer of HslV is capped on each side by a ring-shaped HslU homohexamer. The assembly of the HslU/HslV complex is dependent on binding of ATP.

The protein localises to the cytoplasm. It carries out the reaction ATP-dependent cleavage of peptide bonds with broad specificity.. Allosterically activated by HslU binding. In terms of biological role, protease subunit of a proteasome-like degradation complex believed to be a general protein degrading machinery. The chain is ATP-dependent protease subunit HslV from Stenotrophomonas maltophilia (strain R551-3).